The primary structure comprises 526 residues: Outer capsid protein VP5 (526 aa).

Residues 1–42 (MGKVIRSLSRFGKKVGNALTSNTAKKIYSTIGKAAERFAESE) form an involved in membrane permeabilization region.

This sequence belongs to the orbivirus VP5 family.

Its subcellular location is the virion. Its function is as follows. VP5 protein is one of the two proteins (with VP2) which constitute the virus particle outer capsid. Acts as a membrane permeabilization protein that mediates release of viral particles from endosomal compartments into the cytoplasm. Permeabilization activity is probably negatively regulated by VP2 and is triggered by endosomal degradation of VP2 and exposure to low pH. The polypeptide is Outer capsid protein VP5 (Segment-6) (Bluetongue virus 1 (isolate Australia) (BTV 1)).